An 80-amino-acid polypeptide reads, in one-letter code: Diphthamide biosynthesis protein 3 (80 aa).

One can recognise a DPH-type MB domain in the interval 4–60 (FHDEVEIEDFEFDEEKDVYHYPCPCGDRFEIPREMLEMGEDVAQCPSCSLLIRVIYD). Residues cysteine 26, cysteine 28, cysteine 48, and cysteine 51 each contribute to the Fe cation site.

It belongs to the DPH3 family. In terms of assembly, component of the 2-(3-amino-3-carboxypropyl)histidine synthase complex composed of dph-1, dph-2, dph-3 and a NADH-dependent reductase. It depends on Fe(2+) as a cofactor.

The enzyme catalyses [3Fe-4S](1+)-[protein] + Fe(2+)-[Dph3] = [3Fe-4S](0)-[protein] + Fe(3+)-[Dph3]. The catalysed reaction is 2 [3Fe-4S](0)-[protein] + 2 Fe(2+)-[Dph3] + NADH = 2 [4Fe-4S](1+)-[protein] + 2 [Dph3] + NAD(+) + H(+). Its pathway is protein modification; peptidyl-diphthamide biosynthesis. Required for the first step of diphthamide biosynthesis, a post-translational modification of histidine which occurs in elongation factor 2. Dph-1 and dph-2 transfer a 3-amino-3-carboxypropyl (ACP) group from S-adenosyl-L-methionine (SAM) to a histidine residue, the reaction is assisted by a reduction system comprising dph-3 and a NADH-dependent reductase. Acts as an electron donor to reduce the Fe-S cluster in dph1-dph2 keeping the [4Fe-4S] clusters in the active and reduced state. Restores iron to dph-1-dph-2 iron-sulfur clusters which have degraded from [4Fe-4S] to [3Fe-4S] by donating an iron atom to reform [4Fe-4S] clusters, in a manner dependent on the presence of elongation factor 2 and SAM. Associates with the elongator complex and is required for tRNA Wobble base modifications mediated by the elongator complex. The elongator complex is required for multiple tRNA modifications, including mcm5U (5-methoxycarbonylmethyl uridine), mcm5s 2U (5-methoxycarbonylmethyl-2-thiouridine), and ncm5U (5-carbamoylmethyl uridine). The sequence is that of Diphthamide biosynthesis protein 3 from Caenorhabditis elegans.